We begin with the raw amino-acid sequence, 141 residues long: Nucleoside diphosphate kinase (141 aa).

Residues Lys-11, Phe-59, Arg-87, Thr-93, Arg-104, and Asn-114 each contribute to the ATP site. The active-site Pros-phosphohistidine intermediate is the His-117.

Belongs to the NDK family. As to quaternary structure, homotetramer. Mg(2+) is required as a cofactor.

The protein resides in the cytoplasm. It carries out the reaction a 2'-deoxyribonucleoside 5'-diphosphate + ATP = a 2'-deoxyribonucleoside 5'-triphosphate + ADP. The enzyme catalyses a ribonucleoside 5'-diphosphate + ATP = a ribonucleoside 5'-triphosphate + ADP. Major role in the synthesis of nucleoside triphosphates other than ATP. The ATP gamma phosphate is transferred to the NDP beta phosphate via a ping-pong mechanism, using a phosphorylated active-site intermediate. The chain is Nucleoside diphosphate kinase from Cellvibrio japonicus (strain Ueda107) (Pseudomonas fluorescens subsp. cellulosa).